We begin with the raw amino-acid sequence, 198 residues long: MYDYIKGQLTKITAKYIVVEANGLGYMINVANPYSFTDSVNQLVTIYLHQVIREDAHLLFGFHTEDEKDVFLKLISVSGIGPTTALAIVAVDDNEGLVNAIDNSDIKYLMKFPKIGKKTAQQMVLDLAGKFVEAPQETGHTKARSNKAGNTQLDEAIEALLALGYKATELKKIRAFFEGTSETAEQYIKSALKLLMKG.

A domain I region spans residues 1–63 (MYDYIKGQLT…EDAHLLFGFH (63 aa)). The interval 64–142 (TEDEKDVFLK…EAPQETGHTK (79 aa)) is domain II. The tract at residues 143–147 (ARSNK) is flexible linker. Positions 148-198 (AGNTQLDEAIEALLALGYKATELKKIRAFFEGTSETAEQYIKSALKLLMKG) are domain III.

It belongs to the RuvA family. In terms of assembly, homotetramer. Forms an RuvA(8)-RuvB(12)-Holliday junction (HJ) complex. HJ DNA is sandwiched between 2 RuvA tetramers; dsDNA enters through RuvA and exits via RuvB. An RuvB hexamer assembles on each DNA strand where it exits the tetramer. Each RuvB hexamer is contacted by two RuvA subunits (via domain III) on 2 adjacent RuvB subunits; this complex drives branch migration. In the full resolvosome a probable DNA-RuvA(4)-RuvB(12)-RuvC(2) complex forms which resolves the HJ.

It is found in the cytoplasm. The RuvA-RuvB-RuvC complex processes Holliday junction (HJ) DNA during genetic recombination and DNA repair, while the RuvA-RuvB complex plays an important role in the rescue of blocked DNA replication forks via replication fork reversal (RFR). RuvA specifically binds to HJ cruciform DNA, conferring on it an open structure. The RuvB hexamer acts as an ATP-dependent pump, pulling dsDNA into and through the RuvAB complex. HJ branch migration allows RuvC to scan DNA until it finds its consensus sequence, where it cleaves and resolves the cruciform DNA. The protein is Holliday junction branch migration complex subunit RuvA of Streptococcus pyogenes serotype M6 (strain ATCC BAA-946 / MGAS10394).